The sequence spans 448 residues: Senescence/dehydration-associated protein At4g35985, chloroplastic (448 aa).

The tract at residues 1 to 36 is disordered; that stretch reads MECSATPPKLYPTVDTSTTVAPLPKSSSSSSSTNNN. The transit peptide at 1-56 directs the protein to the chloroplast; it reads MECSATPPKLYPTVDTSTTVAPLPKSSSSSSSTNNNNLYPSINVNDLVNNIFPDPT. Over residues 26–36 the composition is skewed to low complexity; sequence SSSSSSSTNNN. A Senescence domain is found at 248–416; sequence IAAGSGQLIK…AWTVFKIRQA (169 aa). The segment at 422-448 is disordered; the sequence is AMKPSSLAKTVVKTAAKERKKGKKSSK. The span at 439–448 shows a compositional bias: basic residues; the sequence is ERKKGKKSSK.

As to expression, expressed in leaves (especially in midribs and trichomes), apical meristemic regions, stems, roots and flowers.

It localises to the plastid. Its subcellular location is the chloroplast. This is Senescence/dehydration-associated protein At4g35985, chloroplastic from Arabidopsis thaliana (Mouse-ear cress).